A 413-amino-acid chain; its full sequence is Falstatin (413 aa).

The first 21 residues, 1-21 (MNLLVFFCFFLLSCIVHLSRC), serve as a signal peptide directing secretion. Residues 284–294 (LDSVNGNGFVW) carry the BC loop; binds and inhibits the active site cavity of cysteine proteases motif. 2 stretches are compositionally biased toward polar residues: residues 325-339 (ISVT…NSNT) and 346-360 (NNKQ…TTNH). A disordered region spans residues 325–367 (ISVTNPVPIPKNSNTNKDDSINNKQDGSQNNTTTNHFPKPREQ).

It belongs to the protease inhibitor I71 family. In terms of assembly, oligomer; probably composed of 10 monomers. Proteolytically cleaved.

It is found in the secreted. It localises to the cytoplasmic vesicle. The protein localises to the secretory vesicle. Its subcellular location is the microneme. The protein resides in the parasitophorous vacuole lumen. It is found in the host cytoplasm. In terms of biological role, cysteine protease inhibitor. Inhibits cysteine protease falcipains FP2 and FP3. Required for the invasion of host erythrocytes by merozoites. In the mosquito vector, essential for the gliding motility of hemocoel sporozoites and, therefore, for salivary gland invasion and the subsequent transmission from the mosquito to the mammalian host. Required for the invasion of host hepatocytes. During the liver stage, may prevent host hepatocyte cell death likely by inhibiting host cysteine proteases. The polypeptide is Falstatin (Plasmodium falciparum (isolate 3D7)).